Consider the following 926-residue polypeptide: Protein O-mannosyl-transferase Tmtc3 (926 aa).

Residues 1 to 26 (MSTNPNPGIHQYAPSTLPREREREGA) are disordered. Topologically, residues 1 to 36 (MSTNPNPGIHQYAPSTLPREREREGATNSPQRNLLE) are cytoplasmic. The chain crosses the membrane as a helical span at residues 37–57 (FLCICVACIVCYYNSTQCGLV). Topologically, residues 58-114 (FDDISAIRDNKDLRPHTPLINVFLNDFWGTPMRKEQSHKSYRPLTVLTFRFNYLLHA) are extracellular. Residues 115-135 (LEPFGYHLVNLLLHLSVCLLW) traverse the membrane as a helical segment. The Cytoplasmic segment spans residues 136–169 (RRVCRLLLRQCAASGSNAISAPSSSSVSQLNTCA). A helical transmembrane segment spans residues 170-190 (FVASLLFAVHPVHTEAVTGVV). At 191-192 (GR) the chain is on the extracellular side. The chain crosses the membrane as a helical span at residues 193-213 (AELLSSICFLAAFLSYAKSVG). Residues 214–222 (DSGCPRRTN) lie on the Cytoplasmic side of the membrane. The next 2 helical transmembrane spans lie at 223–239 (WLTL…ASML) and 240–259 (CKEQ…LFVV). Topologically, residues 260–303 (HQLRPLHLCHFVLRLFDERTEQQSPKLANPSGIRRWSSSTLWKR) are cytoplasmic. The helical transmembrane segment at 304 to 324 (LSFLVGITLTLLVGRVYVMGS) threads the bilayer. Residues 325–345 (QLPIFTRFDNPASAADTPERQ) are Extracellular-facing. A helical membrane pass occupies residues 346 to 366 (LTYGYLIYLNCWLLLCPSLLC). Over 367 to 384 (CDWTMGTVPLLQGFTDSR) the chain is Cytoplasmic. The chain crosses the membrane as a helical span at residues 385–405 (NITTLLTFLALGAMVAKTCFT). The Extracellular segment spans residues 406 to 419 (RNLALSRTLIMCLG). The helical transmembrane segment at 420 to 440 (WMVLPFLPASNLFFPVGFVVA) threads the bilayer. The Cytoplasmic portion of the chain corresponds to 441–442 (ER). The helical transmembrane segment at 443–463 (ILYMPSMGYCLLVAYGFEQLQ) threads the bilayer. At 464 to 926 (RRGSLSWQRF…RPTHKSRKRS (463 aa)) the chain is on the extracellular side. TPR repeat units lie at residues 514–547 (AKLY…QTDD), 548–581 (IGAH…FPQA), 596–630 (LNVF…RSDY), 631–664 (VQAY…DNEN), 665–698 (ADIY…YPEH), 736–769 (EKVY…KADF), 770–803 (RSAL…HPSH), 805–838 (KGLI…DPHN), and 839–872 (TQGL…APAE). Residues Asn-609 and Asn-645 are each glycosylated (N-linked (GlcNAc...) asparagine).

Belongs to the TMTC family.

It localises to the membrane. Its subcellular location is the endoplasmic reticulum. The catalysed reaction is a di-trans,poly-cis-dolichyl beta-D-mannosyl phosphate + L-seryl-[protein] = 3-O-(alpha-D-mannosyl)-L-seryl-[protein] + a di-trans,poly-cis-dolichyl phosphate + H(+). It carries out the reaction a di-trans,poly-cis-dolichyl beta-D-mannosyl phosphate + L-threonyl-[protein] = 3-O-(alpha-D-mannosyl)-L-threonyl-[protein] + a di-trans,poly-cis-dolichyl phosphate + H(+). The protein operates within protein modification; protein glycosylation. In terms of biological role, transfers mannosyl residues to the hydroxyl group of serine or threonine residues. The sequence is that of Protein O-mannosyl-transferase Tmtc3 from Drosophila melanogaster (Fruit fly).